A 1001-amino-acid chain; its full sequence is Receptor-type tyrosine-protein phosphatase N2 (1001 aa).

An N-terminal signal peptide occupies residues 1–27 (MGPPLPLLLLLLLPPPLPRALPAPASA). The tract at residues 1-407 (MGPPLPLLLL…PEGPLLEKSS (407 aa)) is involved in localization to secretory granules; interaction with CPE. Topologically, residues 28-600 (RGRQLPGRLG…HQEEQEDSTK (573 aa)) are extracellular. The residue at position 259 (R259) is an Omega-N-methylarginine. Disordered regions lie at residues 271-296 (PFSA…SMDD), 308-359 (QQNS…DAPE), and 394-459 (SPLL…LEDQ). Residues 312–325 (EVDRLGPLKEEKAD) are compositionally biased toward basic and acidic residues. Position 339 is a phosphoserine (S339). Residues 340 to 355 (QESHGRGAEGQPREQT) are compositionally biased toward basic and acidic residues. The segment covering 394–404 (SPLLPEGPLLE) has biased composition (low complexity). A compositionally biased stretch (basic and acidic residues) spans 405 to 416 (KSSREEIKKSEQ). Positions 417–428 (PEEVLSSEEETA) are enriched in acidic residues. Residues S422 and S423 each carry the phosphoserine modification. Basic and acidic residues predominate over residues 429–459 (GVEHVRSRTYSKDLFERKPNSEPQPRRLEDQ). N550 carries an N-linked (GlcNAc...) asparagine glycan. The helical transmembrane segment at 601 to 621 (FILLTFLSIACILGVLLASSL) threads the bilayer. Over 622 to 1001 (AYCLRHNSHY…VNAILKALPQ (380 aa)) the chain is Cytoplasmic. A Tyrosine-based internalization motif motif is present at residues 652–661 (YQELCRQRMA). The segment at 663–705 (RPQDRSEGPHTSRINSVSSQFSDGPMPSPSARSSTSSWSEEPV) is disordered. The segment covering 674–684 (SRINSVSSQFS) has biased composition (polar residues). 2 positions are modified to phosphoserine: S678 and S684. The segment covering 691 to 705 (PSARSSTSSWSEEPV) has biased composition (low complexity). T697 carries the post-translational modification Phosphothreonine. The 261-residue stretch at 731–991 (LEKEWEALCA…EFALTAVAEE (261 aa)) folds into the Tyrosine-protein phosphatase domain. Substrate contacts are provided by residues D899 and 931–937 (CSDGAGR). The active-site Phosphocysteine intermediate is the C931. K956 carries the post-translational modification N6-acetyllysine. Position 976 (Q976) interacts with substrate. Positions 990 to 996 (EEVNAIL) match the Leucine-based sorting signal motif.

The protein belongs to the protein-tyrosine phosphatase family. As to quaternary structure, self-associates. Interacts (via cytoplasmic domain) with PTPRN (via cytoplasmic domain). Interacts (precursor form) with CPE. Interacts with HAP1 isoform A. Interacts with AP2A1 or AP2A2 and AP1G1; indicative for an association with adaptor protein complex 2 (AP-2) and adaptor protein complex 1 (AP-1). Interacts with AP2M1; indicative for an association with adaptor protein complex 2 (AP-2). Interacts with MYO5A. Subject to proteolytic cleavage at multiple sites during maturation of secretory granules. In the brain at least IA-2beta71, IA-2beta64 and IA-2beta60 have been detected, in the pancreas and a pancreatic beta cell line only IA-2beta60 has been detected. Detected in brain. Detected in pancreas islets (at protein level). Detected in pancreas and brain.

It is found in the cytoplasmic vesicle. The protein resides in the secretory vesicle membrane. The protein localises to the secretory vesicle. It localises to the synaptic vesicle membrane. It carries out the reaction O-phospho-L-tyrosyl-[protein] + H2O = L-tyrosyl-[protein] + phosphate. In terms of biological role, plays a role in vesicle-mediated secretory processes. Required for normal accumulation of secretory vesicles in hippocampus, pituitary and pancreatic islets. Required for the accumulation of normal levels of insulin-containing vesicles and preventing their degradation. Plays a role in insulin secretion in response to glucose stimuli. Required for normal accumulation of the neurotransmitters norepinephrine, dopamine and serotonin in the brain. In females, but not in males, required for normal accumulation and secretion of pituitary hormones, such as luteinizing hormone (LH) and follicle-stimulating hormone (FSH). Required to maintain normal levels of renin expression and renin release. May regulate catalytic active protein-tyrosine phosphatases such as PTPRA through dimerization. Has phosphatidylinositol phosphatase activity; the PIPase activity is involved in its ability to regulate insulin secretion. Can dephosphorylate phosphatidylinositol 4,5-biphosphate (PI(4,5)P2), phosphatidylinositol 5-phosphate and phosphatidylinositol 3-phosphate. Regulates PI(4,5)P2 level in the plasma membrane and localization of cofilin at the plasma membrane and thus is indirectly involved in regulation of actin dynamics related to cell migration and metastasis; upon hydrolysis of PI(4,5)P2 cofilin is released from the plasma membrane and acts in the cytoplasm in severing F-actin filaments. This Mus musculus (Mouse) protein is Receptor-type tyrosine-protein phosphatase N2 (Ptprn2).